The sequence spans 451 residues: Tapasin-related protein (451 aa).

The N-terminal stretch at 1–20 is a signal peptide; it reads MGLEPSWYLLLCLAVSGAAG. The Lumenal portion of the chain corresponds to 21 to 412; that stretch reads TDPPTAPTTA…RVLPNPEQRG (392 aa). One can recognise an Ig-like V-type domain in the interval 196–301; it reads FQVTSETQTL…TSLYQAQQIM (106 aa). 2 disulfide bridges follow: Cys-217–Cys-288 and Cys-326–Cys-387. N-linked (GlcNAc...) asparagine glycans are attached at residues Asn-270 and Asn-277. In terms of domain architecture, Ig-like C1-type spans 302-399; the sequence is PLNILAPPKI…AHVSLEEPLT (98 aa). Residues 413–433 form a helical membrane-spanning segment; sequence TLGVIFASIIFLSALLLFLGL. At 434–451 the chain is on the cytoplasmic side; sequence HRQQASSSRSTRPMRHSG.

Interacts with peptide-free HLA-A*02-B2M complexes or those loaded with low affinity peptides, likely facilitating peptide exchange onto higher affinity peptides. Interacts with MR1 in a ligand-independent way; this interaction may stabilize MR1 pool and facilitate ligand loading and dissociation. As to expression, widely expressed.

The protein resides in the cell membrane. It is found in the endoplasmic reticulum membrane. It localises to the microsome membrane. Its subcellular location is the golgi apparatus membrane. In terms of biological role, component of the antigen processing and presentation pathway, which binds to MHC class I coupled with beta2-microglobulin/B2M. Association between TAPBPR and MHC class I occurs in the absence of a functional peptide-loading complex (PLC). Expression seems to slow down and down-regulate MHC class I surface expression. This is Tapasin-related protein (Tapbpl) from Mus musculus (Mouse).